Consider the following 383-residue polypeptide: UDP-N-acetylglucosamine--N-acetylmuramyl-(pentapeptide) pyrophosphoryl-undecaprenol N-acetylglucosamine transferase (383 aa).

UDP-N-acetyl-alpha-D-glucosamine is bound by residues 10 to 12, N124, R165, S190, I245, and Q290; that span reads TGG. Residues 364–383 are disordered; the sequence is PFGQAREPGQKPARPPDLAS.

This sequence belongs to the glycosyltransferase 28 family. MurG subfamily.

It is found in the cell inner membrane. The enzyme catalyses di-trans,octa-cis-undecaprenyl diphospho-N-acetyl-alpha-D-muramoyl-L-alanyl-D-glutamyl-meso-2,6-diaminopimeloyl-D-alanyl-D-alanine + UDP-N-acetyl-alpha-D-glucosamine = di-trans,octa-cis-undecaprenyl diphospho-[N-acetyl-alpha-D-glucosaminyl-(1-&gt;4)]-N-acetyl-alpha-D-muramoyl-L-alanyl-D-glutamyl-meso-2,6-diaminopimeloyl-D-alanyl-D-alanine + UDP + H(+). Its pathway is cell wall biogenesis; peptidoglycan biosynthesis. Functionally, cell wall formation. Catalyzes the transfer of a GlcNAc subunit on undecaprenyl-pyrophosphoryl-MurNAc-pentapeptide (lipid intermediate I) to form undecaprenyl-pyrophosphoryl-MurNAc-(pentapeptide)GlcNAc (lipid intermediate II). This chain is UDP-N-acetylglucosamine--N-acetylmuramyl-(pentapeptide) pyrophosphoryl-undecaprenol N-acetylglucosamine transferase, found in Anaeromyxobacter sp. (strain K).